A 608-amino-acid chain; its full sequence is Myosin light chain kinase 2, skeletal/cardiac muscle (608 aa).

A disordered region spans residues 1-160 (MATENGAVEL…RGSPAFLHSP (160 aa)). At Ala-2 the chain carries N-acetylalanine. Composition is skewed to basic and acidic residues over residues 31-43 (AAEK…DPEK) and 50-63 (TKQD…KKDA). Residues 82–91 (GSQGPAGEGG) are compositionally biased toward gly residues. The span at 116–127 (ASEKKPEAEKGP) shows a compositional bias: basic and acidic residues. Ser-153, Ser-159, and Ser-161 each carry phosphoserine. The disordered stretch occupies residues 214-235 (QKEAGEKAPGQADQAKVQGDTS). Residues 297-552 (MNSKEALGGG…AAQCLAHPWL (256 aa)) form the Protein kinase domain. Residues 303-311 (LGGGKFGAV) and Lys-326 contribute to the ATP site. The Proton acceptor role is filled by Asp-418. A Phosphothreonine modification is found at Thr-457. The interval 586 to 598 (IAVSAANRFKKIS) is calmodulin-binding.

Belongs to the protein kinase superfamily. CAMK Ser/Thr protein kinase family. As to quaternary structure, may interact with centrin.

The protein localises to the cytoplasm. The enzyme catalyses L-seryl-[myosin light chain] + ATP = O-phospho-L-seryl-[myosin light chain] + ADP + H(+). The catalysed reaction is L-threonyl-[myosin light chain] + ATP = O-phospho-L-threonyl-[myosin light chain] + ADP + H(+). In terms of biological role, implicated in the level of global muscle contraction and cardiac function. Phosphorylates a specific serine in the N-terminus of a myosin light chain. This chain is Myosin light chain kinase 2, skeletal/cardiac muscle (MYLK2), found in Oryctolagus cuniculus (Rabbit).